The following is a 91-amino-acid chain: MGRSLKKGPFVADSLLRKVEKLNAAGEKPVIKTWSRASTILPMMIGHTIAVHNGKAHVPVFVTEQMVGHKLGEFAPTRTFKGHIKDKKGGR.

This sequence belongs to the universal ribosomal protein uS19 family.

Protein S19 forms a complex with S13 that binds strongly to the 16S ribosomal RNA. The sequence is that of Small ribosomal subunit protein uS19 from Synechococcus sp. (strain RCC307).